The following is a 208-amino-acid chain: V-type proton ATPase subunit E (208 aa).

The protein belongs to the V-ATPase E subunit family.

In terms of biological role, produces ATP from ADP in the presence of a proton gradient across the membrane. The protein is V-type proton ATPase subunit E of Chlamydia trachomatis serovar L2 (strain ATCC VR-902B / DSM 19102 / 434/Bu).